The sequence spans 273 residues: Bifunctional protein FolD (273 aa).

NADP(+)-binding positions include 155–157 (GRS), S180, and T221.

Belongs to the tetrahydrofolate dehydrogenase/cyclohydrolase family. In terms of assembly, homodimer.

The catalysed reaction is (6R)-5,10-methylene-5,6,7,8-tetrahydrofolate + NADP(+) = (6R)-5,10-methenyltetrahydrofolate + NADPH. The enzyme catalyses (6R)-5,10-methenyltetrahydrofolate + H2O = (6R)-10-formyltetrahydrofolate + H(+). It participates in one-carbon metabolism; tetrahydrofolate interconversion. Functionally, catalyzes the oxidation of 5,10-methylenetetrahydrofolate to 5,10-methenyltetrahydrofolate and then the hydrolysis of 5,10-methenyltetrahydrofolate to 10-formyltetrahydrofolate. This Coprothermobacter proteolyticus (strain ATCC 35245 / DSM 5265 / OCM 4 / BT) protein is Bifunctional protein FolD.